A 162-amino-acid chain; its full sequence is Regulatory protein RecX (162 aa).

Belongs to the RecX family.

The protein localises to the cytoplasm. Modulates RecA activity. This is Regulatory protein RecX from Xanthomonas oryzae pv. oryzae (strain PXO99A).